A 92-amino-acid chain; its full sequence is Small ribosomal subunit protein bS20 (92 aa).

A disordered region spans residues 1 to 23; that stretch reads MANTTSAKKATRKIARRTDVNKA.

It belongs to the bacterial ribosomal protein bS20 family.

Binds directly to 16S ribosomal RNA. This is Small ribosomal subunit protein bS20 from Rhizobium leguminosarum bv. trifolii (strain WSM2304).